A 205-amino-acid polypeptide reads, in one-letter code: Methylthioribulose-1-phosphate dehydratase (205 aa).

Positions 96 and 98 each coordinate Zn(2+).

This sequence belongs to the aldolase class II family. MtnB subfamily. Requires Zn(2+) as cofactor.

The enzyme catalyses 5-(methylsulfanyl)-D-ribulose 1-phosphate = 5-methylsulfanyl-2,3-dioxopentyl phosphate + H2O. Its pathway is amino-acid biosynthesis; L-methionine biosynthesis via salvage pathway; L-methionine from S-methyl-5-thio-alpha-D-ribose 1-phosphate: step 2/6. Catalyzes the dehydration of methylthioribulose-1-phosphate (MTRu-1-P) into 2,3-diketo-5-methylthiopentyl-1-phosphate (DK-MTP-1-P). This chain is Methylthioribulose-1-phosphate dehydratase, found in Pseudomonas paraeruginosa (strain DSM 24068 / PA7) (Pseudomonas aeruginosa (strain PA7)).